The primary structure comprises 334 residues: Syntaxin-18 (334 aa).

Topologically, residues 1–308 are cytoplasmic; that stretch reads MAVDITLLFR…EDIREAIKNN (308 aa). Disordered regions lie at residues 29–50 and 166–225; these read GGAD…GDFS and LSKL…GEDE. Basic and acidic residues-rich tracts occupy residues 33-50 and 166-182; these read GSRD…GDFS and LSKL…DSTS. Over residues 183–192 the composition is skewed to polar residues; it reads EKAPQNASQD. Over residues 193–207 the composition is skewed to basic and acidic residues; it reads SEGKPAAEELPEKPL. Residues 242 to 304 form the t-SNARE coiled-coil homology domain; the sequence is IGEMNSLFDE…KEGNEDIREA (63 aa). Residues 309-329 traverse the membrane as a helical; Anchor for type IV membrane protein segment; the sequence is AGFRVWILFFLVMCSFSLLFL. Residues 330-334 are Lumenal-facing; that stretch reads DWYDS.

This sequence belongs to the syntaxin family. In terms of assembly, component of a SNARE complex consisting of STX18, USE1L, BNIP1/SEC20L, and SEC22B. RINT1/TIP20L and ZW10 are associated with the complex through interaction with BNIP1/SEC20L. Interacts directly with USE1L and BNIP1/SEC20L.

It is found in the endoplasmic reticulum membrane. The protein resides in the golgi apparatus membrane. In terms of biological role, syntaxin that may be involved in targeting and fusion of Golgi-derived retrograde transport vesicles with the ER. The protein is Syntaxin-18 (Stx18) of Mus musculus (Mouse).